The chain runs to 284 residues: Hemin import ATP-binding protein HmuV (284 aa).

Positions 33-266 (LGARHLSKSY…KLLSDVYSYE (234 aa)) constitute an ABC transporter domain. 65–72 (GPNGAGKS) serves as a coordination point for ATP.

The protein belongs to the ABC transporter superfamily. Heme (hemin) importer (TC 3.A.1.14.5) family. The complex is composed of two ATP-binding proteins (HmuV), two transmembrane proteins (HmuU) and a solute-binding protein (HmuT).

The protein localises to the cell membrane. Its function is as follows. Part of the ABC transporter complex HmuTUV involved in hemin import. Responsible for energy coupling to the transport system. The chain is Hemin import ATP-binding protein HmuV from Thermobifida fusca (strain YX).